Reading from the N-terminus, the 121-residue chain is ATP synthase epsilon chain (121 aa).

It belongs to the ATPase epsilon chain family. F-type ATPases have 2 components, CF(1) - the catalytic core - and CF(0) - the membrane proton channel. CF(1) has five subunits: alpha(3), beta(3), gamma(1), delta(1), epsilon(1). CF(0) has three main subunits: a, b and c.

The protein resides in the cell membrane. In terms of biological role, produces ATP from ADP in the presence of a proton gradient across the membrane. The sequence is that of ATP synthase epsilon chain from Mycobacterium marinum (strain ATCC BAA-535 / M).